A 500-amino-acid chain; its full sequence is Lysine--tRNA ligase (500 aa).

Mg(2+)-binding residues include Glu-410 and Glu-417.

It belongs to the class-II aminoacyl-tRNA synthetase family. Homodimer. The cofactor is Mg(2+).

It localises to the cytoplasm. The enzyme catalyses tRNA(Lys) + L-lysine + ATP = L-lysyl-tRNA(Lys) + AMP + diphosphate. In Shewanella piezotolerans (strain WP3 / JCM 13877), this protein is Lysine--tRNA ligase.